Consider the following 433-residue polypeptide: Enolase (433 aa).

Residue glutamine 167 participates in (2R)-2-phosphoglycerate binding. Glutamate 209 serves as the catalytic Proton donor. Mg(2+) is bound by residues aspartate 246, glutamate 291, and aspartate 318. (2R)-2-phosphoglycerate-binding residues include lysine 343, arginine 372, serine 373, and lysine 394. Lysine 343 functions as the Proton acceptor in the catalytic mechanism.

It belongs to the enolase family. In terms of assembly, component of the RNA degradosome, a multiprotein complex involved in RNA processing and mRNA degradation. Mg(2+) serves as cofactor.

The protein localises to the cytoplasm. Its subcellular location is the secreted. The protein resides in the cell surface. The catalysed reaction is (2R)-2-phosphoglycerate = phosphoenolpyruvate + H2O. Its pathway is carbohydrate degradation; glycolysis; pyruvate from D-glyceraldehyde 3-phosphate: step 4/5. Its function is as follows. Catalyzes the reversible conversion of 2-phosphoglycerate (2-PG) into phosphoenolpyruvate (PEP). It is essential for the degradation of carbohydrates via glycolysis. The chain is Enolase from Photorhabdus laumondii subsp. laumondii (strain DSM 15139 / CIP 105565 / TT01) (Photorhabdus luminescens subsp. laumondii).